Consider the following 708-residue polypeptide: Wall-associated receptor kinase-like 14 (708 aa).

Residues 1-42 (MLRSIFDFNQRSTKMVMISHKLDLILVFIIVIGGSIFRRVSA) form the signal peptide. N-linked (GlcNAc...) asparagine glycosylation is found at Asn43, Asn88, Asn101, Asn131, Asn158, Asn167, and Asn184. Topologically, residues 43–285 (NFTVPCNGRC…WRHCRSNLIT (243 aa)) are extracellular. Residues 286 to 306 (IVGGTVGGAFLLAALAFFFFC) traverse the membrane as a helical segment. Topologically, residues 307–708 (KRRRSTPLRS…TNTLLGNIPR (402 aa)) are cytoplasmic. The 282-residue stretch at 348–629 (FSEKQKLGIG…LEQIRLSGWI (282 aa)) folds into the Protein kinase domain. ATP contacts are provided by residues 354–362 (LGIGAYGTV) and Lys376. Residue Asp472 is the Proton acceptor of the active site. 2 disordered regions span residues 636-659 (SPAG…SIGS) and 686-708 (VQDP…NIPR). Residues 643–652 (SSDRGSERSV) are compositionally biased toward basic and acidic residues. Polar residues predominate over residues 692-708 (SAQSSPSTNTLLGNIPR).

This sequence belongs to the protein kinase superfamily. Ser/Thr protein kinase family.

The protein localises to the membrane. The enzyme catalyses L-seryl-[protein] + ATP = O-phospho-L-seryl-[protein] + ADP + H(+). It carries out the reaction L-threonyl-[protein] + ATP = O-phospho-L-threonyl-[protein] + ADP + H(+). In terms of biological role, serine/threonine-protein kinase that may function as a signaling receptor of extracellular matrix component. The sequence is that of Wall-associated receptor kinase-like 14 (WAKL14) from Arabidopsis thaliana (Mouse-ear cress).